A 120-amino-acid polypeptide reads, in one-letter code: Crustacean hyperglycemic hormones 1 (120 aa).

Residues 1–27 (MTAFRMVWSMLLASLLMLLVASSTAPA) form the signal peptide. Disulfide bonds link cysteine 53–cysteine 89, cysteine 69–cysteine 85, and cysteine 72–cysteine 98. Valine amide is present on valine 118.

Belongs to the arthropod CHH/MIH/GIH/VIH hormone family.

It localises to the secreted. Functionally, hormone found in the sinus gland of isopods and decapods which controls the blood sugar level. Has a secretagogue action over the amylase released from the midgut gland. May act as a stress hormone and may be involved in the control of molting and reproduction. This chain is Crustacean hyperglycemic hormones 1 (CHH1), found in Penaeus monodon (Giant tiger prawn).